The primary structure comprises 137 residues: Probable 4-amino-4-deoxy-L-arabinose-phosphoundecaprenol flippase subunit ArnF (137 aa).

Over Met1–Arg5 the chain is Cytoplasmic. The helical transmembrane segment at Gly6 to Trp26 threads the bilayer. Residues Gly27–His44 lie on the Periplasmic side of the membrane. Residues Ala45–Leu65 traverse the membrane as a helical segment. Residues Ala66–Ala76 lie on the Cytoplasmic side of the membrane. Residues Tyr77 to Phe97 traverse the membrane as a helical segment. Residues Glu98–Thr100 are Periplasmic-facing. The chain crosses the membrane as a helical span at residues Phe101–Ala121. The Cytoplasmic portion of the chain corresponds to Arg122–Leu137.

It belongs to the ArnF family. As to quaternary structure, heterodimer of ArnE and ArnF.

The protein resides in the cell inner membrane. Its pathway is bacterial outer membrane biogenesis; lipopolysaccharide biosynthesis. Its function is as follows. Translocates 4-amino-4-deoxy-L-arabinose-phosphoundecaprenol (alpha-L-Ara4N-phosphoundecaprenol) from the cytoplasmic to the periplasmic side of the inner membrane. This chain is Probable 4-amino-4-deoxy-L-arabinose-phosphoundecaprenol flippase subunit ArnF, found in Pseudomonas paraeruginosa (strain DSM 24068 / PA7) (Pseudomonas aeruginosa (strain PA7)).